The sequence spans 560 residues: RNA polymerase-associated protein C651.09c (560 aa).

Disordered stretches follow at residues 15-74 and 128-207; these read DDSD…KNPY and YMAQ…KVEQ. The span at 148 to 171 shows a compositional bias: basic and acidic residues; the sequence is GKRDKLTELKKRRQERSARSVSER. Acidic residues predominate over residues 180–195; it reads DYEEQNESEKSEEEEG. Ser197 bears the Phosphoserine mark. The 132-residue stretch at 214-345 folds into the Plus3 domain; sequence SANLYDLNAI…KLNDLRDMSK (132 aa). Residues 387-456 adopt a coiled-coil conformation; the sequence is AGNAELVKEI…RRRLSAAATA (70 aa). The span at 440 to 449 shows a compositional bias: basic and acidic residues; sequence EQRMNEERRR. The interval 440–486 is disordered; it reads EQRMNEERRRLSAAATATPMSAPTSVLTGTSPQPSPSLSTSIMSTPK. The segment covering 451–480 has biased composition (low complexity); sequence SAAATATPMSAPTSVLTGTSPQPSPSLSTS. Phosphoserine is present on residues Ser502 and Ser506.

In terms of assembly, component of the PAF1 complex.

It localises to the nucleus. It is found in the nucleoplasm. In terms of biological role, the PAF1 complex is a multifunctional complex. Involved in transcription initiation via genetic interactions with TATA-binding proteins. Involved in elongation. Also has a role in transcription-coupled histone modification. Important for TATA site selection by TBP. Directly or indirectly regulates the DNA-binding properties of the TATA box-binding protein, and the relative activities of different TATA elements. The polypeptide is RNA polymerase-associated protein C651.09c (Schizosaccharomyces pombe (strain 972 / ATCC 24843) (Fission yeast)).